Consider the following 200-residue polypeptide: High mobility group protein 1 homolog (200 aa).

2 DNA-binding regions (HMG box) span residues 11–81 (PRGR…QSYK) and 100–168 (PKRN…AEYK). Positions 64-86 (EKSMRDKVRYDREMQSYKPPKGE) are enriched in basic and acidic residues. Disordered stretches follow at residues 64 to 103 (EKSM…PKRN) and 169 to 200 (AKAK…DDSD). A compositionally biased stretch (acidic residues) spans 190–200 (SSDDSSSDDSD).

The protein belongs to the HMGB family.

Its subcellular location is the nucleus. The protein localises to the chromosome. In terms of biological role, binds preferentially single-stranded DNA and unwinds double-stranded DNA. This Strongylocentrotus purpuratus (Purple sea urchin) protein is High mobility group protein 1 homolog (HMG1).